Consider the following 357-residue polypeptide: Enoyl-[acyl-carrier-protein] reductase, mitochondrial (357 aa).

The transit peptide at 1–19 (MLRRGFLSRINAAQWSRQM) directs the protein to the mitochondrion. The 317-residue stretch at 36–352 (EVLQLVEDKL…FKGFTGKKYI (317 aa)) folds into the Enoyl reductase (ER) domain. The active-site Proton donor is Tyr-74. Residues Asn-147, 173–176 (NSAV), 196–198 (RDR), 264–267 (YGGM), 289–291 (FWM), Lys-349, and Lys-350 contribute to the NADP(+) site.

The protein belongs to the zinc-containing alcohol dehydrogenase family. Quinone oxidoreductase subfamily. Homodimer. Expressed in the central nervous system.

It localises to the mitochondrion. The enzyme catalyses a 2,3-saturated acyl-[ACP] + NADP(+) = a (2E)-enoyl-[ACP] + NADPH + H(+). Catalyzes the NADPH-dependent reduction of trans-2-enoyl thioesters in mitochondrial fatty acid synthesis (fatty acid synthesis type II). Fatty acid chain elongation in mitochondria uses acyl carrier protein (ACP) as an acyl group carrier, but the enzyme accepts both ACP and CoA thioesters as substrates in vitro. Involved in iron homeostasis; affecting Fe-S cluster assembly and ceramide metabolism. Required for proper morphology and bioenergetic functions of mitochondria. Required for maintenance of neurons, including photoreceptor neurons. This chain is Enoyl-[acyl-carrier-protein] reductase, mitochondrial, found in Drosophila melanogaster (Fruit fly).